Reading from the N-terminus, the 479-residue chain is MGIDVPLFRQMTPMGHRLSSTRPNYMTSIRLKSTIPHVGRVDLTNSKTMVHVSGRDAAKLLNGLFTLPVSSGAATPFSGVFGAFLNGKGRVITDAFLYTTSNHTEEDQSFVIEFDKAVEDELLLHLKRHRIRAKVKMEKLTDYECIFIWNRDATPDYWRRENECDSGFFQSLCEVAWSVAEVGETSEVEEKNGEPAQKPLYGLLVDDRYPLLGIRMILPAKTSTTYFSAIPSANLTQYNMLRYIRGTPEGSREIPPNKALPMESDLDYMNGLDFNRGCYVGQELTIRTHHTGVVRKRIVPFQLYQEGQEPGEYECQYDPELSGALPPLLDGSNVISLNSQPEERTFASSPFDSPKKEAEPKSEEAASEGGVPSWAKPKETDAAESNLPNKPKPVKLGNILSHHGNVGMALVRLDKIMQQQDIQLAVELPPGPNGEVNYLRAKLYYPLFVTDVSEAEAEAEAELEMERVRKEETHKNGQL.

The N-terminal 99 residues, 1 to 99 (MGIDVPLFRQ…RVITDAFLYT (99 aa)), are a transit peptide targeting the mitochondrion. Residues 341–351 (PEERTFASSPF) show a composition bias toward polar residues. A disordered region spans residues 341 to 395 (PEERTFASSPFDSPKKEAEPKSEEAASEGGVPSWAKPKETDAAESNLPNKPKPVK). Residues 353 to 364 (SPKKEAEPKSEE) show a composition bias toward basic and acidic residues.

The protein belongs to the GcvT family. CAF17/IBA57 subfamily.

The protein resides in the mitochondrion matrix. This chain is Iron-sulfur cluster assembly factor IBA57 homolog, mitochondrial (CAF17), found in Yarrowia lipolytica (strain CLIB 122 / E 150) (Yeast).